Reading from the N-terminus, the 180-residue chain is MVEAWYMDESQEDQRAPHRLQPNRAVSLEQLRRLGVAYRRLDADNYETDPRLKEIREAENYSWMDIVTIHKDKLPNYEEKIKTFYEEHLHLDDEIRYILDGSGYFDVRDKDDKWIRISMEKGDMITLPAGIYHRFTLDENNYVKAMRLFVGEPVWTAYNRPADDFPARKQYMKFLAEEAQ.

Fe(2+)-binding residues include His-88, His-90, Glu-94, and His-133. His-88, His-90, Glu-94, and His-133 together coordinate Ni(2+).

Belongs to the acireductone dioxygenase (ARD) family. As to quaternary structure, monomer. Interacts with MMP14. Fe(2+) serves as cofactor. The cofactor is Ni(2+).

It localises to the cytoplasm. The protein resides in the nucleus. Its subcellular location is the cell membrane. The enzyme catalyses 1,2-dihydroxy-5-(methylsulfanyl)pent-1-en-3-one + O2 = 4-methylsulfanyl-2-oxobutanoate + formate + 2 H(+). It catalyses the reaction 1,2-dihydroxy-5-(methylsulfanyl)pent-1-en-3-one + O2 = 3-(methylsulfanyl)propanoate + CO + formate + 2 H(+). The protein operates within amino-acid biosynthesis; L-methionine biosynthesis via salvage pathway; L-methionine from S-methyl-5-thio-alpha-D-ribose 1-phosphate: step 5/6. Its function is as follows. Catalyzes 2 different reactions between oxygen and the acireductone 1,2-dihydroxy-3-keto-5-methylthiopentene (DHK-MTPene) depending upon the metal bound in the active site. Fe-containing acireductone dioxygenase (Fe-ARD) produces formate and 2-keto-4-methylthiobutyrate (KMTB), the alpha-ketoacid precursor of methionine in the methionine recycle pathway. Ni-containing acireductone dioxygenase (Ni-ARD) produces methylthiopropionate, carbon monoxide and formate, and does not lie on the methionine recycle pathway. In Gallus gallus (Chicken), this protein is Acireductone dioxygenase.